The chain runs to 496 residues: MHAKSLTELRAALDAKECSAVELAQHYLKRIDAARDLNAFVHVDAELTLAQAKAADAALANGEAGPLAGLPIAHKDVFVTRGWRSTAGSKMLANYASPFDATVVARLSAAGMVTLGKTNMDEFAMGSSNENSAFGPVKNPWDTSAVPGGSSGGSSAAVAARLAPAATGTDTGGSIRQPASFAGVTGIKPTYGRVSRYGMIAFASSLDQGGPMARSAADCALLLNAMAGFDERDSTSLERADEDYTRHLGKAWAAGGDAGKPLAGLRIGLPAEYFGAGLADDVRAAIDAALKTYEALGATLVPVSLPKTELSIPVYYVIAPAEASSNLSRFDGVRYGHRAAEYRDLLDMYKKSRAEGFGPEVKRRILVGTYVLSHGYYDAYYLQAQKIRRIIAQDFQEAFKSCDVIMGPASPTVAWDIGAKGDDPVQMYLADIYTLSVSLAGLPGMSVPCGFGAGANAKRPVGLQIIGNYFDEARMLQVADAFQRATDWHVQEPAGV.

Active-site charge relay system residues include K75 and S150. S174 (acyl-ester intermediate) is an active-site residue.

It belongs to the amidase family. GatA subfamily. As to quaternary structure, heterotrimer of A, B and C subunits.

The catalysed reaction is L-glutamyl-tRNA(Gln) + L-glutamine + ATP + H2O = L-glutaminyl-tRNA(Gln) + L-glutamate + ADP + phosphate + H(+). Its function is as follows. Allows the formation of correctly charged Gln-tRNA(Gln) through the transamidation of misacylated Glu-tRNA(Gln) in organisms which lack glutaminyl-tRNA synthetase. The reaction takes place in the presence of glutamine and ATP through an activated gamma-phospho-Glu-tRNA(Gln). The protein is Glutamyl-tRNA(Gln) amidotransferase subunit A of Burkholderia pseudomallei (strain 1106a).